The sequence spans 167 residues: Crossover junction endodeoxyribonuclease RuvC (167 aa).

Catalysis depends on residues D11, E71, and D143. 3 residues coordinate Mg(2+): D11, E71, and D143.

This sequence belongs to the RuvC family. As to quaternary structure, homodimer which binds Holliday junction (HJ) DNA. The HJ becomes 2-fold symmetrical on binding to RuvC with unstacked arms; it has a different conformation from HJ DNA in complex with RuvA. In the full resolvosome a probable DNA-RuvA(4)-RuvB(12)-RuvC(2) complex forms which resolves the HJ. It depends on Mg(2+) as a cofactor.

It is found in the cytoplasm. It catalyses the reaction Endonucleolytic cleavage at a junction such as a reciprocal single-stranded crossover between two homologous DNA duplexes (Holliday junction).. The RuvA-RuvB-RuvC complex processes Holliday junction (HJ) DNA during genetic recombination and DNA repair. Endonuclease that resolves HJ intermediates. Cleaves cruciform DNA by making single-stranded nicks across the HJ at symmetrical positions within the homologous arms, yielding a 5'-phosphate and a 3'-hydroxyl group; requires a central core of homology in the junction. The consensus cleavage sequence is 5'-(A/T)TT(C/G)-3'. Cleavage occurs on the 3'-side of the TT dinucleotide at the point of strand exchange. HJ branch migration catalyzed by RuvA-RuvB allows RuvC to scan DNA until it finds its consensus sequence, where it cleaves and resolves the cruciform DNA. The protein is Crossover junction endodeoxyribonuclease RuvC of Acidiphilium cryptum (strain JF-5).